A 183-amino-acid polypeptide reads, in one-letter code: Microfibrillar-associated protein 2 (183 aa).

The segment at residues 1 to 17 is a signal peptide (or 19); that stretch reads MRAAYLFLLFLPAGLLA. At glutamine 18 the chain carries Pyrrolidone carboxylic acid. Sulfotyrosine is present on residues tyrosine 47, tyrosine 48, and tyrosine 50. Residues 58 to 94 form a disordered region; the sequence is SEEQFQFQSQQQVQQEVIPAPTPEPGNAELEPTEPGP. Low complexity predominate over residues 60–74; it reads EQFQFQSQQQVQQEV. The ShKT domain occupies 153–183; sequence CRDKFSKCGVMASSGLCQSVAASCARSCGSC. 3 disulfide bridges follow: cysteine 153–cysteine 183, cysteine 160–cysteine 176, and cysteine 169–cysteine 180.

Belongs to the MFAP family. As to quaternary structure, forms a ternary complex with BGN and ELN. Interacts with FBN1 (via N-terminal domain) and FBN2. Post-translationally, forms intermolecular disulfide bonds either with other MAGP-1 molecules or with other components of the microfibrils. May form transglutaminase cross-links. O-glycosylated.

Its subcellular location is the secreted. It is found in the extracellular space. The protein localises to the extracellular matrix. Its function is as follows. Component of the elastin-associated microfibrils. The protein is Microfibrillar-associated protein 2 (MFAP2) of Homo sapiens (Human).